We begin with the raw amino-acid sequence, 85 residues long: Small ribosomal subunit protein uS17 (85 aa).

The protein belongs to the universal ribosomal protein uS17 family. In terms of assembly, part of the 30S ribosomal subunit.

One of the primary rRNA binding proteins, it binds specifically to the 5'-end of 16S ribosomal RNA. The protein is Small ribosomal subunit protein uS17 of Acinetobacter baumannii (strain AB307-0294).